The sequence spans 363 residues: GTPase Obg (363 aa).

Residues 1–159 form the Obg domain; sequence MKFVDEAFID…KSLKLELKVL (159 aa). Residues 160-341 form the OBG-type G domain; that stretch reads ADVGLLGRPN…LVHAIFGHVQ (182 aa). Residues 166-173, 191-195, 213-216, 291-294, and 322-324 each bind GTP; these read GRPNAGKS, FTTLH, DIPG, NKLD, and SAL. Mg(2+) is bound by residues serine 173 and threonine 193. Positions 343-363 are disordered; sequence GQRMDNEPPPLDPRFASAGPA.

This sequence belongs to the TRAFAC class OBG-HflX-like GTPase superfamily. OBG GTPase family. Monomer. Mg(2+) serves as cofactor.

It localises to the cytoplasm. In terms of biological role, an essential GTPase which binds GTP, GDP and possibly (p)ppGpp with moderate affinity, with high nucleotide exchange rates and a fairly low GTP hydrolysis rate. Plays a role in control of the cell cycle, stress response, ribosome biogenesis and in those bacteria that undergo differentiation, in morphogenesis control. The sequence is that of GTPase Obg from Verminephrobacter eiseniae (strain EF01-2).